A 209-amino-acid chain; its full sequence is Small ribosomal subunit protein uS4 (209 aa).

Residues 99-162 (RRLDNMVYRL…RKNNKIIEAM (64 aa)) enclose the S4 RNA-binding domain.

Belongs to the universal ribosomal protein uS4 family. In terms of assembly, part of the 30S ribosomal subunit. Contacts protein S5. The interaction surface between S4 and S5 is involved in control of translational fidelity.

Functionally, one of the primary rRNA binding proteins, it binds directly to 16S rRNA where it nucleates assembly of the body of the 30S subunit. With S5 and S12 plays an important role in translational accuracy. This chain is Small ribosomal subunit protein uS4, found in Syntrophus aciditrophicus (strain SB).